The sequence spans 816 residues: Probable E3 ubiquitin-protein ligase hulA (816 aa).

One can recognise a C2 domain in the interval 1–112 (MGSNLPAQPN…QMGGDEMLTR (112 aa)). Disordered regions lie at residues 134-238 (NLST…WERR) and 253-353 (RTTT…YFVD). Composition is skewed to polar residues over residues 151–168 (MQPSTSSGLVPQVSASTP), 177–202 (ADPTASNPSLHPQRVPSTTRPSSTIV), 217–226 (SRTNLSSFED), and 253–270 (RTTTWTRPSNNYNEQTSR). Residues 229 to 262 (GRLPAGWERREDNLGRTYYVDHNTRTTTWTRPSN) enclose the WW 1 domain. A compositionally biased stretch (basic and acidic residues) spans 279-294 (LERRAHQSRMLPEDRT). Polar residues predominate over residues 295-309 (GASSPNLQENQQQAQ). Residues 310–333 (TPPAGGSASAVSMMATGATTAGTG) show a composition bias toward low complexity. WW domains are found at residues 333–366 (GELPPGWEQRTTPEGRPYFVDHNTRTTTWVDPRR) and 393–426 (GPLPSGWEMRLTNTARVYFVDHNTKTTTWDDPRL). Residues 482–816 (SASDLKKRLM…VEETLGFGQE (335 aa)) enclose the HECT domain. Cysteine 784 serves as the catalytic Glycyl thioester intermediate.

It belongs to the RSP5/NEDD4 family. In terms of assembly, interacts with creD.

Its subcellular location is the cytoplasm. The enzyme catalyses S-ubiquitinyl-[E2 ubiquitin-conjugating enzyme]-L-cysteine + [acceptor protein]-L-lysine = [E2 ubiquitin-conjugating enzyme]-L-cysteine + N(6)-ubiquitinyl-[acceptor protein]-L-lysine.. It participates in protein modification; protein ubiquitination. Its function is as follows. E3 ubiquitin-protein ligase which accepts ubiquitin from an E2 ubiquitin-conjugating enzyme in the form of a thioester and then directly transfers the ubiquitin to targeted substrates. Probably involved in the regulatory network controlling carbon source utilization. The sequence is that of Probable E3 ubiquitin-protein ligase hulA (hulA) from Aspergillus oryzae (strain ATCC 42149 / RIB 40) (Yellow koji mold).